The following is a 476-amino-acid chain: uncharacterized protein (476 aa).

Helical transmembrane passes span 4 to 24 (FFSF…LFGA), 81 to 101 (ALAI…AAFI), 141 to 161 (WMGV…FSGV), 174 to 194 (FDFP…LAIT), 207 to 227 (FVPL…VMNI), 233 to 253 (VIWS…GAAG), 300 to 320 (MIGI…LILL), 351 to 371 (FVTL…YIYA), 391 to 411 (ICTF…MWQL), and 414 to 434 (IIMA…SPVV).

It belongs to the alanine or glycine:cation symporter (AGCS) (TC 2.A.25) family.

The protein resides in the cell inner membrane. This is an uncharacterized protein from Escherichia coli (strain K12).